A 287-amino-acid polypeptide reads, in one-letter code: PAK4-inhibitor INKA1 (287 aa).

2 disordered regions span residues 22–59 (GRDTGSPSMPGPLQPTSQTGPDVQPSHQLRASGALEED) and 138–157 (SRAPVASVPPVHHPRPKSTP). The span at 35–50 (QPTSQTGPDVQPSHQL) shows a compositional bias: polar residues. Over residues 138-147 (SRAPVASVPP) the composition is skewed to low complexity. Inka box regions lie at residues 168-205 (EAEDWTAALLNRGRSRQPLVLGDNCFADLVHNWMELPE) and 261-287 (PADVSRFAALMSCRSRQPIICNDVSYL).

Belongs to the INKA family. In terms of assembly, interacts with PAK4.

The protein localises to the nucleus. Its subcellular location is the cytoplasm. Inhibitor of the serine/threonine-protein kinase PAK4. Acts by binding PAK4 in a substrate-like manner, inhibiting the protein kinase activity. The polypeptide is PAK4-inhibitor INKA1 (Homo sapiens (Human)).